Consider the following 108-residue polypeptide: Iron-sulfur cluster assembly protein CyaY (108 aa).

This sequence belongs to the frataxin family.

Involved in iron-sulfur (Fe-S) cluster assembly. May act as a regulator of Fe-S biogenesis. This is Iron-sulfur cluster assembly protein CyaY from Burkholderia cenocepacia (strain ATCC BAA-245 / DSM 16553 / LMG 16656 / NCTC 13227 / J2315 / CF5610) (Burkholderia cepacia (strain J2315)).